We begin with the raw amino-acid sequence, 216 residues long: Heart- and neural crest derivatives-expressed protein 2 (216 aa).

The tract at residues Met74–Asn115 is disordered. Residues Val82–Gly93 are compositionally biased toward gly residues. Positions Pro96 to Thr111 are enriched in basic residues. The region spanning Lys98–Leu150 is the bHLH domain.

As to quaternary structure, efficient DNA binding requires dimerization with another bHLH protein.

It localises to the nucleus. In terms of biological role, essential for cardiac morphogenesis. Binds DNA on E-box consensus sequence 5'-CANNTG-3'. Plays an important role in limb development, particularly in the establishment of anterior-posterior polarization of the limb bud. The sequence is that of Heart- and neural crest derivatives-expressed protein 2 (HAND2) from Gallus gallus (Chicken).